Consider the following 125-residue polypeptide: Large ribosomal subunit protein bL12 (125 aa).

It belongs to the bacterial ribosomal protein bL12 family. In terms of assembly, homodimer. Part of the ribosomal stalk of the 50S ribosomal subunit. Forms a multimeric L10(L12)X complex, where L10 forms an elongated spine to which 2 to 4 L12 dimers bind in a sequential fashion. Binds GTP-bound translation factors.

Its function is as follows. Forms part of the ribosomal stalk which helps the ribosome interact with GTP-bound translation factors. Is thus essential for accurate translation. This Mannheimia succiniciproducens (strain KCTC 0769BP / MBEL55E) protein is Large ribosomal subunit protein bL12.